Reading from the N-terminus, the 144-residue chain is Ferredoxin-thioredoxin reductase catalytic chain, chloroplastic (144 aa).

A chloroplast-targeting transit peptide spans Met1–Gln31. [4Fe-4S] cluster is bound at residue Cys83. The Nucleophile role is filled by Cys85. Cys85 and Cys115 are joined by a disulfide. [4Fe-4S] cluster is bound by residues Cys102, Cys104, and Cys113.

It belongs to the ferredoxin thioredoxin reductase beta subunit family. As to quaternary structure, heterodimer of subunit A (variable subunit) and subunit B (catalytic subunit). Heterodimeric FTR forms a complex with ferredoxin and thioredoxin. It depends on [4Fe-4S] cluster as a cofactor.

It is found in the plastid. The protein resides in the chloroplast. The catalysed reaction is [thioredoxin]-disulfide + 2 reduced [2Fe-2S]-[ferredoxin] + 2 H(+) = [thioredoxin]-dithiol + 2 oxidized [2Fe-2S]-[ferredoxin]. Catalytic subunit of the ferredoxin-thioredoxin reductase (FTR), which catalyzes the two-electron reduction of thioredoxins by the electrons provided by reduced ferredoxin. This is Ferredoxin-thioredoxin reductase catalytic chain, chloroplastic (FTRC) from Glycine max (Soybean).